The chain runs to 59 residues: UPF0391 membrane protein lpg2521 (59 aa).

The next 2 helical transmembrane spans lie at A5 to V25 and I30 to L50.

This sequence belongs to the UPF0391 family.

It localises to the cell membrane. The chain is UPF0391 membrane protein lpg2521 from Legionella pneumophila subsp. pneumophila (strain Philadelphia 1 / ATCC 33152 / DSM 7513).